The chain runs to 249 residues: Serine 3-dehydrogenase (249 aa).

NADP(+) is bound at residue 6–30; it reads LITGATSGFGQATARRFVKEGWKVI. Ser-135 provides a ligand contact to substrate. Tyr-148 (proton acceptor) is an active-site residue.

The protein belongs to the short-chain dehydrogenases/reductases (SDR) family. As to quaternary structure, homotetramer.

The enzyme catalyses L-serine + NADP(+) = aminoacetaldehyde + CO2 + NADPH. Functionally, catalyzes the oxidation of the hydroxyl group of serine to form 2-aminomalonate semialdehyde which is spontaneously converted into 2-aminoacetaldehyde and CO(2). Also acts on D-serine, L-glycerate, D-glycerate and 2-methyl-DL-serine. Does not act on O-methyl-DL-serine and L-threonine. The protein is Serine 3-dehydrogenase (sdh) of Agrobacterium fabrum (strain C58 / ATCC 33970) (Agrobacterium tumefaciens (strain C58)).